A 126-amino-acid chain; its full sequence is Large ribosomal subunit protein bL12 (126 aa).

This sequence belongs to the bacterial ribosomal protein bL12 family. Homodimer. Part of the ribosomal stalk of the 50S ribosomal subunit. Forms a multimeric L10(L12)X complex, where L10 forms an elongated spine to which 2 to 4 L12 dimers bind in a sequential fashion. Binds GTP-bound translation factors.

Forms part of the ribosomal stalk which helps the ribosome interact with GTP-bound translation factors. Is thus essential for accurate translation. The chain is Large ribosomal subunit protein bL12 from Corynebacterium diphtheriae (strain ATCC 700971 / NCTC 13129 / Biotype gravis).